Here is a 26-residue protein sequence, read N- to C-terminus: Ribulose bisphosphate carboxylase large chain (26 aa).

Positions 1–2 are excised as a propeptide; that stretch reads MS. Pro-3 carries the post-translational modification N-acetylproline.

It belongs to the RuBisCO large chain family. Type I subfamily. Heterohexadecamer of 8 large chains and 8 small chains.

It localises to the plastid. Its subcellular location is the chloroplast. The catalysed reaction is 2 (2R)-3-phosphoglycerate + 2 H(+) = D-ribulose 1,5-bisphosphate + CO2 + H2O. It catalyses the reaction D-ribulose 1,5-bisphosphate + O2 = 2-phosphoglycolate + (2R)-3-phosphoglycerate + 2 H(+). Its function is as follows. RuBisCO catalyzes two reactions: the carboxylation of D-ribulose 1,5-bisphosphate, the primary event in carbon dioxide fixation, as well as the oxidative fragmentation of the pentose substrate in the photorespiration process. Both reactions occur simultaneously and in competition at the same active site. This is Ribulose bisphosphate carboxylase large chain (rbcL) from Vicia faba (Broad bean).